The following is a 451-amino-acid chain: Phosphoglucosamine mutase (451 aa).

Catalysis depends on Ser-101, which acts as the Phosphoserine intermediate. Positions 101, 240, 242, and 244 each coordinate Mg(2+). Ser-101 is modified (phosphoserine).

Belongs to the phosphohexose mutase family. It depends on Mg(2+) as a cofactor. Activated by phosphorylation.

The enzyme catalyses alpha-D-glucosamine 1-phosphate = D-glucosamine 6-phosphate. Functionally, catalyzes the conversion of glucosamine-6-phosphate to glucosamine-1-phosphate. The protein is Phosphoglucosamine mutase of Nitrosococcus oceani (strain ATCC 19707 / BCRC 17464 / JCM 30415 / NCIMB 11848 / C-107).